The sequence spans 600 residues: Aspartate--tRNA(Asp/Asn) ligase (600 aa).

Glu174 provides a ligand contact to L-aspartate. The tract at residues 198 to 201 (QLFK) is aspartate. Arg220 is a binding site for L-aspartate. ATP contacts are provided by residues 220-222 (RDE) and Gln229. Residue His457 participates in L-aspartate binding. Position 491 (Glu491) interacts with ATP. Position 498 (Arg498) interacts with L-aspartate. 543 to 546 (GLDR) serves as a coordination point for ATP.

Belongs to the class-II aminoacyl-tRNA synthetase family. Type 1 subfamily. Homodimer.

It is found in the cytoplasm. The enzyme catalyses tRNA(Asx) + L-aspartate + ATP = L-aspartyl-tRNA(Asx) + AMP + diphosphate. Its function is as follows. Aspartyl-tRNA synthetase with relaxed tRNA specificity since it is able to aspartylate not only its cognate tRNA(Asp) but also tRNA(Asn). Reaction proceeds in two steps: L-aspartate is first activated by ATP to form Asp-AMP and then transferred to the acceptor end of tRNA(Asp/Asn). In Burkholderia orbicola (strain MC0-3), this protein is Aspartate--tRNA(Asp/Asn) ligase.